A 205-amino-acid polypeptide reads, in one-letter code: Small ribosomal subunit protein uS4 (205 aa).

The segment covering 1 to 12 has biased composition (basic residues); that stretch reads MSKRVQAKHKLD. Residues 1-49 form a disordered region; it reads MSKRVQAKHKLDRRMGQNIWGRPKSPVNRREYGPGQHGQRRKGKMSDFG. The S4 RNA-binding domain occupies 94–155; that stretch reads RRLDAVVYRS…ASRQLEIVVV (62 aa).

The protein belongs to the universal ribosomal protein uS4 family. In terms of assembly, part of the 30S ribosomal subunit. Contacts protein S5. The interaction surface between S4 and S5 is involved in control of translational fidelity.

Functionally, one of the primary rRNA binding proteins, it binds directly to 16S rRNA where it nucleates assembly of the body of the 30S subunit. Its function is as follows. With S5 and S12 plays an important role in translational accuracy. In Methylorubrum extorquens (strain CM4 / NCIMB 13688) (Methylobacterium extorquens), this protein is Small ribosomal subunit protein uS4.